The following is a 51-amino-acid chain: UPF0391 membrane protein Psyc_0130 (51 aa).

2 helical membrane-spanning segments follow: residues 6–26 and 28–47; these read IIFA…VAGL and ANFA…VAFV.

This sequence belongs to the UPF0391 family.

It localises to the cell membrane. The protein is UPF0391 membrane protein Psyc_0130 of Psychrobacter arcticus (strain DSM 17307 / VKM B-2377 / 273-4).